A 315-amino-acid chain; its full sequence is Taste receptor type 2 member 3 (315 aa).

The Extracellular portion of the chain corresponds to 1–5 (MGLTE). Residues 6 to 26 (GLFLILSGTQFALGILVNCFI) traverse the membrane as a helical segment. Over 27–41 (GLVNGSSWFKTKRMS) the chain is Cytoplasmic. The chain crosses the membrane as a helical span at residues 42-62 (LSDFIITTLAFLRIILLCIIL). Residues 63 to 93 (TDSFLIEFSPNAHDSGVIMQIIDVSWTFTNH) are Extracellular-facing. The chain crosses the membrane as a helical span at residues 94 to 114 (LSIWLATCLGVLYCLKIASFS). Residues 115–127 (HPTFLWLKWRVSR) are Cytoplasmic-facing. The chain crosses the membrane as a helical span at residues 128-148 (VMVWMLLGVLLLSCGSTASLI). Topologically, residues 149-185 (NEFKLYSVFRGIEATXNVTEHFRKKRSEYYLIHVLGT) are extracellular. Asparagine 165 carries N-linked (GlcNAc...) asparagine glycosylation. A helical membrane pass occupies residues 186-206 (LWYLPPLIVSLAAYFLLIFSL). The Cytoplasmic portion of the chain corresponds to 207–233 (GRHTRQMLQNGTSSRDPSTEAHKRAIR). A helical transmembrane segment spans residues 234 to 254 (IILSSFFLFLLYFLAFLIASF). The Extracellular portion of the chain corresponds to 255–265 (GNFLPKTKMAK). Residues 266–286 (MIGEVMTMFYPAGHSFILILG) traverse the membrane as a helical segment. Over 287-315 (NSKLKQTFVEMLRCESGHLKPGSKGPIFS) the chain is Cytoplasmic.

It belongs to the G-protein coupled receptor T2R family.

Its subcellular location is the membrane. Its function is as follows. Gustducin-coupled receptor implicated in the perception of bitter compounds in the oral cavity and the gastrointestinal tract. Signals through PLCB2 and the calcium-regulated cation channel TRPM5. The protein is Taste receptor type 2 member 3 (TAS2R3) of Pongo pygmaeus (Bornean orangutan).